The chain runs to 118 residues: Large ribosomal subunit protein uL18 (118 aa).

Residues 1-25 are disordered; it reads MITKPDKNKVRQKRHRRVRGKLSGT. The span at 10-20 shows a compositional bias: basic residues; sequence VRQKRHRRVRG.

This sequence belongs to the universal ribosomal protein uL18 family. Part of the 50S ribosomal subunit; part of the 5S rRNA/L5/L18/L25 subcomplex. Contacts the 5S and 23S rRNAs.

This is one of the proteins that bind and probably mediate the attachment of the 5S RNA into the large ribosomal subunit, where it forms part of the central protuberance. The polypeptide is Large ribosomal subunit protein uL18 (Streptococcus gordonii (strain Challis / ATCC 35105 / BCRC 15272 / CH1 / DL1 / V288)).